Reading from the N-terminus, the 199-residue chain is Large ribosomal subunit protein eL13A (199 aa).

Phosphothreonine is present on residues Thr144 and Thr152.

It belongs to the eukaryotic ribosomal protein eL13 family. As to quaternary structure, component of the large ribosomal subunit (LSU). Mature yeast ribosomes consist of a small (40S) and a large (60S) subunit. The 40S small subunit contains 1 molecule of ribosomal RNA (18S rRNA) and 33 different proteins (encoded by 57 genes). The large 60S subunit contains 3 rRNA molecules (25S, 5.8S and 5S rRNA) and 46 different proteins (encoded by 81 genes).

It is found in the cytoplasm. In terms of biological role, component of the ribosome, a large ribonucleoprotein complex responsible for the synthesis of proteins in the cell. The small ribosomal subunit (SSU) binds messenger RNAs (mRNAs) and translates the encoded message by selecting cognate aminoacyl-transfer RNA (tRNA) molecules. The large subunit (LSU) contains the ribosomal catalytic site termed the peptidyl transferase center (PTC), which catalyzes the formation of peptide bonds, thereby polymerizing the amino acids delivered by tRNAs into a polypeptide chain. The nascent polypeptides leave the ribosome through a tunnel in the LSU and interact with protein factors that function in enzymatic processing, targeting, and the membrane insertion of nascent chains at the exit of the ribosomal tunnel. The polypeptide is Large ribosomal subunit protein eL13A (Saccharomyces cerevisiae (strain ATCC 204508 / S288c) (Baker's yeast)).